The sequence spans 146 residues: Large ribosomal subunit protein uL15 (146 aa).

Positions 1–13 (MKLHELRPAEGSR) are enriched in basic and acidic residues. Residues 1 to 55 (MKLHELRPAEGSRKSPKRVGRGTGSGLGKTSARGENGQNSRSGGGVRPGFEGGQM) are disordered. Positions 42-52 (SGGGVRPGFEG) are enriched in gly residues.

It belongs to the universal ribosomal protein uL15 family. As to quaternary structure, part of the 50S ribosomal subunit.

Binds to the 23S rRNA. The sequence is that of Large ribosomal subunit protein uL15 from Clostridium tetani (strain Massachusetts / E88).